A 113-amino-acid polypeptide reads, in one-letter code: Hydrogenase maturation factor HypA (113 aa).

His2 is a binding site for Ni(2+). Positions 73, 76, 89, and 92 each coordinate Zn(2+).

It belongs to the HypA/HybF family.

In terms of biological role, involved in the maturation of [NiFe] hydrogenases. Required for nickel insertion into the metal center of the hydrogenase. This is Hydrogenase maturation factor HypA from Cereibacter sphaeroides (strain KD131 / KCTC 12085) (Rhodobacter sphaeroides).